A 185-amino-acid polypeptide reads, in one-letter code: Dirigent protein 12 (185 aa).

The first 25 residues, 1–25, serve as a signal peptide directing secretion; the sequence is MTNQIYKQVFSFFLSVLLLQSSTVS. Cysteine 37 and cysteine 184 are disulfide-bonded. N-linked (GlcNAc...) asparagine glycosylation is found at asparagine 56 and asparagine 120.

The protein belongs to the plant dirigent protein family. Homodimer. Seed coat specific expression.

Its subcellular location is the secreted. It is found in the extracellular space. It localises to the apoplast. Dirigent proteins impart stereoselectivity on the phenoxy radical-coupling reaction, yielding optically active lignans from two molecules of coniferyl alcohol in the biosynthesis of lignans, flavonolignans, and alkaloids and thus plays a central role in plant secondary metabolism. Required for seed accumulation of neolignans. This Arabidopsis thaliana (Mouse-ear cress) protein is Dirigent protein 12 (DIR12).